The following is a 511-amino-acid chain: Aminotransferase FGSG_17085 (511 aa).

165–166 contributes to the pyridoxal 5'-phosphate binding site; sequence GA. Tyr-200 lines the substrate pocket. Pyridoxal 5'-phosphate is bound at residue Asp-310. Lys-339 bears the N6-(pyridoxal phosphate)lysine mark. Gly-371 provides a ligand contact to substrate. Pyridoxal 5'-phosphate is bound at residue 372-373; sequence HT.

This sequence belongs to the class-III pyridoxal-phosphate-dependent aminotransferase family. Requires pyridoxal 5'-phosphate as cofactor.

The protein operates within secondary metabolite biosynthesis. Functionally, aminotransferase; part of the gene cluster that mediates the biosynthesis of the lipopeptide fusaristatin A. Fusaristatin A consists of a polyketide chain linked to three amino acid residues glutamine (Gln), dehydroalanine (dehydro-Ala), and beta-aminoisobutyric acid. The biosynthesis starts with formation of a linear polyketide chain by the highly reducing polyketide synthase PKS6. The gene cluster does not contain an acyl-CoA ligase or an acyl-transferase, and it is therefore predicted that the polyketide is transferred directly to the nonribosomal peptide synthetase NRPS7. Modules 1-3 from NRPS7 incorporate dehydro-Ala, Gln, and beta-aminoisobutyric acid in the compound, which is released by cyclization. The beta-aminoisobutyric acid units are most likely not freely available to the NRPS, but can be synthesized from thymine, which requires a dehydrogenase, a monooxygenase, and an aminotransferase. The fusaristatin A cluster contains a cytochrome P450 monooxygenase (FGSG_08207) and an aminotransferase (FGSG_17085), which theoretically can perform two of the enzymatic steps. The enzymes may however also be involved in biosynthesis of dehydroalanine or modification of the polyketide. The dehydro-Ala residue can be a result of cyclization, where serine is dehydrated. The last gene of the cluster encodes a protein with an A/B barrel domain found in variable enzymes, which hampers functional prediction. The protein is Aminotransferase FGSG_17085 of Gibberella zeae (strain ATCC MYA-4620 / CBS 123657 / FGSC 9075 / NRRL 31084 / PH-1) (Wheat head blight fungus).